The chain runs to 471 residues: NADH-quinone oxidoreductase subunit N (471 aa).

The next 14 membrane-spanning stretches (helical) occupy residues 6–26 (FILP…LGVY), 30–50 (SSNI…ILIF), 70–90 (LSSF…SIST), 98–118 (IFLI…MVMI), 123–143 (LMVF…LASF), 158–178 (FVLS…VYGF), 198–218 (LTFG…AVPF), 230–250 (PTAV…TVFI), 264–284 (WQPI…IAAI), 292–312 (LIAY…STGS), 320–340 (IVYM…LLML), 365–385 (LSLL…GFFA), 400–420 (FLAI…LKII), and 438–458 (IWLK…FIFP).

Belongs to the complex I subunit 2 family. NDH-1 is composed of 14 different subunits. Subunits NuoA, H, J, K, L, M, N constitute the membrane sector of the complex.

Its subcellular location is the cell inner membrane. It carries out the reaction a quinone + NADH + 5 H(+)(in) = a quinol + NAD(+) + 4 H(+)(out). Its function is as follows. NDH-1 shuttles electrons from NADH, via FMN and iron-sulfur (Fe-S) centers, to quinones in the respiratory chain. The immediate electron acceptor for the enzyme in this species is believed to be ubiquinone. Couples the redox reaction to proton translocation (for every two electrons transferred, four hydrogen ions are translocated across the cytoplasmic membrane), and thus conserves the redox energy in a proton gradient. This is NADH-quinone oxidoreductase subunit N from Pelagibacter ubique (strain HTCC1062).